A 275-amino-acid polypeptide reads, in one-letter code: Bis(5'-nucleosyl)-tetraphosphatase, symmetrical (275 aa).

Belongs to the Ap4A hydrolase family.

It catalyses the reaction P(1),P(4)-bis(5'-adenosyl) tetraphosphate + H2O = 2 ADP + 2 H(+). Hydrolyzes diadenosine 5',5'''-P1,P4-tetraphosphate to yield ADP. The polypeptide is Bis(5'-nucleosyl)-tetraphosphatase, symmetrical (Actinobacillus succinogenes (strain ATCC 55618 / DSM 22257 / CCUG 43843 / 130Z)).